The sequence spans 317 residues: Acetyl-coenzyme A carboxylase carboxyl transferase subunit alpha (317 aa).

The 254-residue stretch at 40-293 (LEKRSADALK…GDIITASLRS (254 aa)) folds into the CoA carboxyltransferase C-terminal domain.

This sequence belongs to the AccA family. In terms of assembly, acetyl-CoA carboxylase is a heterohexamer composed of biotin carboxyl carrier protein (AccB), biotin carboxylase (AccC) and two subunits each of ACCase subunit alpha (AccA) and ACCase subunit beta (AccD).

Its subcellular location is the cytoplasm. It carries out the reaction N(6)-carboxybiotinyl-L-lysyl-[protein] + acetyl-CoA = N(6)-biotinyl-L-lysyl-[protein] + malonyl-CoA. Its pathway is lipid metabolism; malonyl-CoA biosynthesis; malonyl-CoA from acetyl-CoA: step 1/1. Functionally, component of the acetyl coenzyme A carboxylase (ACC) complex. First, biotin carboxylase catalyzes the carboxylation of biotin on its carrier protein (BCCP) and then the CO(2) group is transferred by the carboxyltransferase to acetyl-CoA to form malonyl-CoA. This Brucella anthropi (strain ATCC 49188 / DSM 6882 / CCUG 24695 / JCM 21032 / LMG 3331 / NBRC 15819 / NCTC 12168 / Alc 37) (Ochrobactrum anthropi) protein is Acetyl-coenzyme A carboxylase carboxyl transferase subunit alpha.